A 216-amino-acid polypeptide reads, in one-letter code: Ribosomal RNA small subunit methyltransferase G (216 aa).

S-adenosyl-L-methionine-binding positions include Gly-83, Met-88, 134-135 (VE), and Arg-149.

The protein belongs to the methyltransferase superfamily. RNA methyltransferase RsmG family.

It is found in the cytoplasm. The catalysed reaction is guanosine(527) in 16S rRNA + S-adenosyl-L-methionine = N(7)-methylguanosine(527) in 16S rRNA + S-adenosyl-L-homocysteine. In terms of biological role, specifically methylates the N7 position of guanine in position 527 of 16S rRNA. This chain is Ribosomal RNA small subunit methyltransferase G, found in Pseudomonas putida (strain ATCC 700007 / DSM 6899 / JCM 31910 / BCRC 17059 / LMG 24140 / F1).